We begin with the raw amino-acid sequence, 364 residues long: Lipoyl synthase, chloroplastic (364 aa).

The N-terminal 70 residues, 1–70 (MEQTLFNPSI…PNVKKPEWLR (70 aa)), are a transit peptide targeting the chloroplast. Positions 32-52 (STNSPSSNTKTTTVTVPSKKT) are enriched in low complexity. Residues 32–64 (STNSPSSNTKTTTVTVPSKKTMGPYTGRDPNVK) form a disordered region. [4Fe-4S] cluster is bound by residues C95, C100, C106, C126, C130, C133, and S341. Positions 109–330 (GGGDGIATAT…KEYGESIGFR (222 aa)) constitute a Radical SAM core domain.

It belongs to the radical SAM superfamily. Lipoyl synthase family. The cofactor is [4Fe-4S] cluster.

It localises to the plastid. It is found in the chloroplast. The catalysed reaction is [[Fe-S] cluster scaffold protein carrying a second [4Fe-4S](2+) cluster] + N(6)-octanoyl-L-lysyl-[protein] + 2 oxidized [2Fe-2S]-[ferredoxin] + 2 S-adenosyl-L-methionine + 4 H(+) = [[Fe-S] cluster scaffold protein] + N(6)-[(R)-dihydrolipoyl]-L-lysyl-[protein] + 4 Fe(3+) + 2 hydrogen sulfide + 2 5'-deoxyadenosine + 2 L-methionine + 2 reduced [2Fe-2S]-[ferredoxin]. It participates in protein modification; protein lipoylation via endogenous pathway; protein N(6)-(lipoyl)lysine from octanoyl-[acyl-carrier-protein]: step 2/2. Catalyzes the radical-mediated insertion of two sulfur atoms into the C-6 and C-8 positions of the octanoyl moiety bound to the lipoyl domains of lipoate-dependent enzymes, thereby converting the octanoylated domains into lipoylated derivatives. The chain is Lipoyl synthase, chloroplastic from Ricinus communis (Castor bean).